Consider the following 425-residue polypeptide: Glutamyl-tRNA reductase (425 aa).

Substrate contacts are provided by residues 47–50 (TCNR), S107, 112–114 (EDQ), and Q118. The active-site Nucleophile is the C48. An NADP(+)-binding site is contributed by 187–192 (GAGHMA).

This sequence belongs to the glutamyl-tRNA reductase family. As to quaternary structure, homodimer.

The catalysed reaction is (S)-4-amino-5-oxopentanoate + tRNA(Glu) + NADP(+) = L-glutamyl-tRNA(Glu) + NADPH + H(+). It participates in porphyrin-containing compound metabolism; protoporphyrin-IX biosynthesis; 5-aminolevulinate from L-glutamyl-tRNA(Glu): step 1/2. The protein operates within porphyrin-containing compound metabolism; chlorophyll biosynthesis. In terms of biological role, catalyzes the NADPH-dependent reduction of glutamyl-tRNA(Glu) to glutamate 1-semialdehyde (GSA). The sequence is that of Glutamyl-tRNA reductase from Roseiflexus castenholzii (strain DSM 13941 / HLO8).